The following is a 506-amino-acid chain: Glutamate--tRNA ligase (506 aa).

The 'HIGH' region signature appears at Pro29–Leu39. The 'KMSKS' region motif lies at Lys273–Arg277. Lys276 serves as a coordination point for ATP.

The protein belongs to the class-I aminoacyl-tRNA synthetase family. Glutamate--tRNA ligase type 1 subfamily. As to quaternary structure, monomer.

Its subcellular location is the cytoplasm. It catalyses the reaction tRNA(Glu) + L-glutamate + ATP = L-glutamyl-tRNA(Glu) + AMP + diphosphate. Its function is as follows. Catalyzes the attachment of glutamate to tRNA(Glu) in a two-step reaction: glutamate is first activated by ATP to form Glu-AMP and then transferred to the acceptor end of tRNA(Glu). This is Glutamate--tRNA ligase from Paenarthrobacter aurescens (strain TC1).